The following is a 498-amino-acid chain: Aspartyl/glutamyl-tRNA(Asn/Gln) amidotransferase subunit B (498 aa).

It belongs to the GatB/GatE family. GatB subfamily. As to quaternary structure, heterotrimer of A, B and C subunits.

It carries out the reaction L-glutamyl-tRNA(Gln) + L-glutamine + ATP + H2O = L-glutaminyl-tRNA(Gln) + L-glutamate + ADP + phosphate + H(+). The catalysed reaction is L-aspartyl-tRNA(Asn) + L-glutamine + ATP + H2O = L-asparaginyl-tRNA(Asn) + L-glutamate + ADP + phosphate + 2 H(+). Functionally, allows the formation of correctly charged Asn-tRNA(Asn) or Gln-tRNA(Gln) through the transamidation of misacylated Asp-tRNA(Asn) or Glu-tRNA(Gln) in organisms which lack either or both of asparaginyl-tRNA or glutaminyl-tRNA synthetases. The reaction takes place in the presence of glutamine and ATP through an activated phospho-Asp-tRNA(Asn) or phospho-Glu-tRNA(Gln). In Caulobacter vibrioides (strain ATCC 19089 / CIP 103742 / CB 15) (Caulobacter crescentus), this protein is Aspartyl/glutamyl-tRNA(Asn/Gln) amidotransferase subunit B.